The primary structure comprises 132 residues: Histone H2B.1 (132 aa).

Residues 1-13 are compositionally biased toward low complexity; the sequence is MSAKASKAPASKA. The disordered stretch occupies residues 1–39; sequence MSAKASKAPASKAPAEKKPAAKKTSSSTDPSKKRTKARK. Lys7 is modified (N6-acetyllysine; alternate). Lys7 participates in a covalent cross-link: Glycyl lysine isopeptide (Lys-Gly) (interchain with G-Cter in SUMO); alternate. Ser11 carries the post-translational modification Phosphoserine. Lys12 is modified (N6-acetyllysine). Lys17 is subject to N6-acetyllysine; alternate. A Glycyl lysine isopeptide (Lys-Gly) (interchain with G-Cter in SUMO); alternate cross-link involves residue Lys17. Lys18 is covalently cross-linked (Glycyl lysine isopeptide (Lys-Gly) (interchain with G-Cter in SUMO)). Residue Lys125 forms a Glycyl lysine isopeptide (Lys-Gly) (interchain with G-Cter in ubiquitin) linkage.

It belongs to the histone H2B family. As to quaternary structure, the nucleosome is a histone octamer containing two molecules each of H2A, H2B, H3 and H4 assembled in one H3-H4 heterotetramer and two H2A-H2B heterodimers. The octamer wraps approximately 147 bp of DNA. Post-translationally, monoubiquitinated by the UBC2-BRE1 complex to form H2BK123ub1. H2BK123ub1 gives a specific tag for epigenetic transcriptional activation and is also prerequisite for H3K4me and H3K79me formation. H2BK123ub1 also modulates the formation of double-strand breaks during meiosis and is a prerequisite for DNA-damage checkpoint activation. Phosphorylated by STE20 to form H2BS10ph during progression through meiotic prophase. May be correlated with chromosome condensation. In terms of processing, acetylated by GCN5 to form H2BK11ac and H2BK16ac. H2BK16ac can also be formed by ESA1. Acetylation of N-terminal lysines and particularly formation of H2BK11acK16ac has a positive effect on transcription. Post-translationally, sumoylation to form H2BK6su and probably also H2BK16su or H2BK17su, occurs preferentially near the telomeres and represses gene transcription.

The protein localises to the nucleus. It is found in the chromosome. Functionally, core component of nucleosome. Nucleosomes wrap and compact DNA into chromatin, limiting DNA accessibility to the cellular machineries which require DNA as a template. Histones thereby play a central role in transcription regulation, DNA repair, DNA replication and chromosomal stability. DNA accessibility is regulated via a complex set of post-translational modifications of histones, also called histone code, and nucleosome remodeling. This is Histone H2B.1 (HTB1) from Kluyveromyces lactis (strain ATCC 8585 / CBS 2359 / DSM 70799 / NBRC 1267 / NRRL Y-1140 / WM37) (Yeast).